Here is an 86-residue protein sequence, read N- to C-terminus: Mu-theraphotoxin-Hhn1b 1 (86 aa).

Residues 1 to 21 (MKASMFLALAGLALLFVVCYA) form the signal peptide. The propeptide occupies 22–49 (SESEEKEFSNELLSSVLAVDDNSKGEER). 3 cysteine pairs are disulfide-bonded: Cys-51/Cys-66, Cys-58/Cys-73, and Cys-65/Cys-80. The residue at position 84 (Ile-84) is an Isoleucine amide.

It belongs to the neurotoxin 10 (Hwtx-1) family. 22 (Htx-4) subfamily. As to quaternary structure, monomer. As to expression, expressed by the venom gland.

It is found in the secreted. In terms of biological role, neurotoxin that selectively inhibits neuronal tetrodotoxin-sensitive voltage-gated sodium channels (Nav) (IC(50)=44.6 nM). It is active on Nav1.2/SCN2A (IC(50)=22.4 nM), Nav1.6/SCN8A (IC(50)=50.1 nM) and Nav1.7/SCN9A (IC(50)=48.9 nM). It shows low affinity for lipid bilayers. The chain is Mu-theraphotoxin-Hhn1b 1 from Cyriopagopus hainanus (Chinese bird spider).